The primary structure comprises 935 residues: Ribonuclease E (935 aa).

An S1 motif domain is found at 39–119 (ANIYKGKITR…GNKGAALTTF (81 aa)). Mg(2+) contacts are provided by D302 and D345. Zn(2+) is bound by residues C403 and C406. The segment at 403 to 406 (CPRC) is required for zinc-mediated homotetramerization and catalytic activity. Disordered stretches follow at residues 571–669 (TKSE…DLRK) and 698–743 (VQNN…KSPM). Composition is skewed to basic and acidic residues over residues 593–625 (RSQD…ERNQ) and 701–719 (NDEK…ERQR). The span at 720-734 (RTPRHLRAANNQRRR) shows a compositional bias: basic residues.

This sequence belongs to the RNase E/G family. RNase E subfamily. Component of the RNA degradosome, which is a multiprotein complex involved in RNA processing and mRNA degradation. Within the RNA degradosome, RNase E assembles into a homotetramer formed by a dimer of dimers. Zn(2+) serves as cofactor. The cofactor is Mg(2+).

The protein resides in the cytoplasm. The protein localises to the cell inner membrane. The enzyme catalyses Endonucleolytic cleavage of single-stranded RNA in A- and U-rich regions.. In terms of biological role, endoribonuclease that plays a central role in RNA processing and decay. Required for the maturation of 5S and 16S rRNAs and the majority of tRNAs. Also involved in the degradation of most mRNAs. The sequence is that of Ribonuclease E from Haemophilus influenzae (strain ATCC 51907 / DSM 11121 / KW20 / Rd).